The following is a 287-amino-acid chain: Urease accessory protein UreD (287 aa).

Belongs to the UreD family. In terms of assembly, ureD, UreF and UreG form a complex that acts as a GTP-hydrolysis-dependent molecular chaperone, activating the urease apoprotein by helping to assemble the nickel containing metallocenter of UreC. The UreE protein probably delivers the nickel.

It is found in the cytoplasm. In terms of biological role, required for maturation of urease via the functional incorporation of the urease nickel metallocenter. The sequence is that of Urease accessory protein UreD from Herpetosiphon aurantiacus (strain ATCC 23779 / DSM 785 / 114-95).